Reading from the N-terminus, the 375-residue chain is Aminomethyltransferase (375 aa).

Belongs to the GcvT family. In terms of assembly, the glycine cleavage system is composed of four proteins: P, T, L and H.

The catalysed reaction is N(6)-[(R)-S(8)-aminomethyldihydrolipoyl]-L-lysyl-[protein] + (6S)-5,6,7,8-tetrahydrofolate = N(6)-[(R)-dihydrolipoyl]-L-lysyl-[protein] + (6R)-5,10-methylene-5,6,7,8-tetrahydrofolate + NH4(+). Its function is as follows. The glycine cleavage system catalyzes the degradation of glycine. The polypeptide is Aminomethyltransferase (Cupriavidus necator (strain ATCC 17699 / DSM 428 / KCTC 22496 / NCIMB 10442 / H16 / Stanier 337) (Ralstonia eutropha)).